The following is a 327-amino-acid chain: L-lactate dehydrogenase (327 aa).

Residues V18, D39, K44, Y69, and 83-84 each bind NAD(+); that span reads GA. Residues Q86, R92, and 124–127 each bind substrate; that span reads NPVD. NAD(+) is bound by residues 122-124 and S147; that span reads AAN. 152–155 provides a ligand contact to substrate; sequence DSAR. The beta-D-fructose 1,6-bisphosphate site is built by R157 and H172. H179 acts as the Proton acceptor in catalysis. Position 224 is a phosphotyrosine (Y224). A substrate-binding site is contributed by T233.

The protein belongs to the LDH/MDH superfamily. LDH family. As to quaternary structure, homotetramer.

The protein resides in the cytoplasm. The catalysed reaction is (S)-lactate + NAD(+) = pyruvate + NADH + H(+). It participates in fermentation; pyruvate fermentation to lactate; (S)-lactate from pyruvate: step 1/1. Its activity is regulated as follows. Allosterically activated by fructose 1,6-bisphosphate (FBP). In terms of biological role, catalyzes the conversion of lactate to pyruvate. In Streptococcus uberis (strain ATCC BAA-854 / 0140J), this protein is L-lactate dehydrogenase.